The following is a 377-amino-acid chain: RNA polymerase sigma factor SigA (377 aa).

The disordered stretch occupies residues 72–92 (EVSNLRQGEDHDGNDNDDFNF). The interval 144–214 (LAEANLRLVV…TRAIADQART (71 aa)) is sigma-70 factor domain-2. The short motif at 168 to 171 (DLIQ) is the Interaction with polymerase core subunit RpoC element. The interval 223–299 (ETINKLIRVS…DQEALTPADA (77 aa)) is sigma-70 factor domain-3. The interval 312–365 (VLDTLTEREENVLRLRFGLDDGRTRTLEEVGKVFGVTRERIRQIEAKALRKLRH) is sigma-70 factor domain-4. A DNA-binding region (H-T-H motif) is located at residues 338–357 (LEEVGKVFGVTRERIRQIEA).

Belongs to the sigma-70 factor family. RpoD/SigA subfamily. In terms of assembly, interacts transiently with the RNA polymerase catalytic core.

The protein resides in the cytoplasm. In terms of biological role, sigma factors are initiation factors that promote the attachment of RNA polymerase to specific initiation sites and are then released. This sigma factor is the primary sigma factor during exponential growth. The polypeptide is RNA polymerase sigma factor SigA (Bacillus sp).